A 282-amino-acid polypeptide reads, in one-letter code: MAVPETRPNHTIYINNLNEKIKKDELKKSLYAIFSQFGQILDILVSRSLKMRGQAFVIFKEVSSATNALRSMQGFPFYDKPMRIQYAKTDSDIIAKMKGTFVERDRKREKRKPKSQETPAAKKAVQGGAAAPVVGTVQGPVPGMPPMTQAPRIMHHMPGQPPYMPPPGMIPPPGLAPGQLPPGAMPPQQLMPGQMPPAQPLSENPPNHILFLTNLPEETNELMLSMLFNQFPGFKEVRLVPGRHDIAFVEFDNEVQAGAARDALQGFKITQNNAMKISFAKK.

Alanine 2 carries the post-translational modification N-acetylalanine. Positions 10-89 (HTIYINNLNE…KPMRIQYAKT (80 aa)) constitute an RRM 1 domain. N6-acetyllysine is present on lysine 60. The segment at 101–141 (FVERDRKREKRKPKSQETPAAKKAVQGGAAAPVVGTVQGPV) is disordered. The span at 119–141 (PAAKKAVQGGAAAPVVGTVQGPV) shows a compositional bias: low complexity. Residue arginine 152 is modified to Omega-N-methylarginine. An RRM 2 domain is found at 208–282 (HILFLTNLPE…NAMKISFAKK (75 aa)).

The protein belongs to the RRM U1 A/B'' family. As to quaternary structure, U1 snRNP is composed of the 7 core Sm proteins SNRPB, SNRPD1, SNRPD2, SNRPD3, SNRPE, SNRPF and SNRPG that assemble in a heptameric protein ring on the Sm site of the small nuclear RNA to form the core snRNP, and at least three U1 snRNP-specific proteins SNRNP70/U1-70K, SNRPA/U1-A and SNRPC/U1-C. Interacts with SFPQ; component of a snRNP-free complex with SFPQ.

It localises to the nucleus. Functionally, component of the spliceosomal U1 snRNP, which is essential for recognition of the pre-mRNA 5' splice-site and the subsequent assembly of the spliceosome. U1 snRNP is the first snRNP to interact with pre-mRNA. This interaction is required for the subsequent binding of U2 snRNP and the U4/U6/U5 tri-snRNP. SNRPA binds stem loop II of U1 snRNA. In a snRNP-free form (SF-A) may be involved in coupled pre-mRNA splicing and polyadenylation process. May bind preferentially to the 5'-UGCAC-3' motif on RNAs. This chain is U1 small nuclear ribonucleoprotein A (SNRPA), found in Bos taurus (Bovine).